We begin with the raw amino-acid sequence, 127 residues long: Large ribosomal subunit protein bL17 (127 aa).

It belongs to the bacterial ribosomal protein bL17 family. In terms of assembly, part of the 50S ribosomal subunit. Contacts protein L32.

The protein is Large ribosomal subunit protein bL17 of Lacticaseibacillus casei (strain BL23) (Lactobacillus casei).